Reading from the N-terminus, the 341-residue chain is S-adenosylmethionine:tRNA ribosyltransferase-isomerase (341 aa).

The protein belongs to the QueA family. Monomer.

The protein resides in the cytoplasm. The catalysed reaction is 7-aminomethyl-7-carbaguanosine(34) in tRNA + S-adenosyl-L-methionine = epoxyqueuosine(34) in tRNA + adenine + L-methionine + 2 H(+). It participates in tRNA modification; tRNA-queuosine biosynthesis. Its function is as follows. Transfers and isomerizes the ribose moiety from AdoMet to the 7-aminomethyl group of 7-deazaguanine (preQ1-tRNA) to give epoxyqueuosine (oQ-tRNA). The polypeptide is S-adenosylmethionine:tRNA ribosyltransferase-isomerase (Staphylococcus epidermidis (strain ATCC 35984 / DSM 28319 / BCRC 17069 / CCUG 31568 / BM 3577 / RP62A)).